A 223-amino-acid chain; its full sequence is Glucosyl-3-phosphoglycerate phosphatase (223 aa).

Arginine 10 is a substrate binding site. Histidine 11 (tele-phosphohistidine intermediate) is an active-site residue. An Isoglutamyl lysine isopeptide (Lys-Gln) (interchain with Q-Cter in protein Pup) cross-link involves residue lysine 47. Residue arginine 60 participates in substrate binding. The active-site Proton donor/acceptor is glutamate 84. Histidine 159 provides a ligand contact to substrate.

This sequence belongs to the phosphoglycerate mutase family. Homodimer. Dimerization of the enzyme is essential for its dephosphorylation activity.

It carries out the reaction (2R)-2-O-(alpha-D-glucopyranosyl)-3-phospho-glycerate + H2O = (2R)-2-O-(alpha-D-glucopyranosyl)-glycerate + phosphate. The enzyme catalyses 2-O-(alpha-D-mannosyl)-3-phosphoglycerate + H2O = (2R)-2-O-(alpha-D-mannosyl)-glycerate + phosphate. It catalyses the reaction (2R)-2-O-[alpha-D-mannopyranosyl-(1-&gt;2)-alpha-D-glucopyranosyl]-3-phospho-glycerate + H2O = (2R)-2-O-[alpha-D-mannopyranosyl-(1-&gt;2)-alpha-D-glucopyranosyl]-glycerate + phosphate. Progressively inhibited by cobalt ions at concentrations between 10-50 mM and by copper ions at any concentration between 1-50 mM. In terms of biological role, involved in the biosynthesis of mycobacterial methylglucose lipopolysaccharides (MGLPs). Catalyzes the dephosphorylation of glucosyl-3-phosphoglycerate (GPG) to glucosylglycerate (GG). GPG is the preferred substrate, but GpgP also exhibits low dephosphorylation activity on mannosyl-3-phosphoglycerate (MPG) and mannosylglucosyl-3-phosphoglycerate (MGPG) in vitro. Shows only trace of phosphoglycerate mutase (PGM) activity. This chain is Glucosyl-3-phosphoglycerate phosphatase, found in Mycobacterium tuberculosis (strain ATCC 25618 / H37Rv).